Here is a 672-residue protein sequence, read N- to C-terminus: Penicillin-binding protein activator LpoA (672 aa).

Residues 1–26 (MLPFHLVRTQAGRVIPVLLAALFLAG) form the signal peptide. Cys27 is lipidated: N-palmitoyl cysteine. Residue Cys27 is the site of S-diacylglycerol cysteine attachment. The tract at residues 298 to 336 (APPTDTAQAGQVTPSSDGQNAQSPAPYSDQAVASTTPAP) is disordered. A compositionally biased stretch (polar residues) spans 305–322 (QAGQVTPSSDGQNAQSPA). The segment covering 327-336 (QAVASTTPAP) has biased composition (low complexity).

It belongs to the LpoA family. In terms of assembly, interacts with PBP1a.

Its subcellular location is the cell outer membrane. Regulator of peptidoglycan synthesis that is essential for the function of penicillin-binding protein 1A (PBP1a). In Pectobacterium parmentieri (strain WPP163) (Pectobacterium wasabiae (strain WPP163)), this protein is Penicillin-binding protein activator LpoA.